Consider the following 142-residue polypeptide: Coiled-coil-helix-coiled-coil-helix domain-containing protein 10, mitochondrial (142 aa).

The transit peptide at 1-16 (MPRGSRSAASRPASRP) directs the protein to the mitochondrion. Residues 1 to 20 (MPRGSRSAASRPASRPAAPS) are compositionally biased toward low complexity. Disordered regions lie at residues 1–45 (MPRG…PGLM) and 68–97 (ALTG…PQPL). The span at 21-39 (AHPPAHPPPSAAAPAPAPS) shows a compositional bias: pro residues. The span at 80-90 (PSQPAVQQAPT) shows a compositional bias: low complexity. The 42-residue stretch at 99-140 (MGPCAYEIRQFLDCSTTQSDLSLCEGFSEALKQCKYYHGLSS) folds into the CHCH domain. 2 short sequence motifs (cx9C motif) span residues 102 to 112 (CAYEIRQFLDC) and 122 to 132 (CEGFSEALKQC). 2 disulfides stabilise this stretch: C102-C132 and C112-C122.

As to expression, ubiquitously expressed. Higher expression is observed in heart and liver.

The protein resides in the mitochondrion intermembrane space. May be involved in the maintenance of mitochondrial organization and mitochondrial cristae structure. The protein is Coiled-coil-helix-coiled-coil-helix domain-containing protein 10, mitochondrial (CHCHD10) of Homo sapiens (Human).